Here is a 272-residue protein sequence, read N- to C-terminus: Shikimate dehydrogenase (NADP(+)) (272 aa).

Residues 14 to 16 and Thr61 each bind shikimate; that span reads SKS. Lys65 (proton acceptor) is an active-site residue. Glu77 contributes to the NADP(+) binding site. Residues Asn86 and Asp102 each coordinate shikimate. Residues 126 to 130, 149 to 154, and Met213 each bind NADP(+); these read GAGGA and NRTVSR. A shikimate-binding site is contributed by Tyr215. Gly237 serves as a coordination point for NADP(+).

The protein belongs to the shikimate dehydrogenase family. Homodimer.

The catalysed reaction is shikimate + NADP(+) = 3-dehydroshikimate + NADPH + H(+). The protein operates within metabolic intermediate biosynthesis; chorismate biosynthesis; chorismate from D-erythrose 4-phosphate and phosphoenolpyruvate: step 4/7. Its function is as follows. Involved in the biosynthesis of the chorismate, which leads to the biosynthesis of aromatic amino acids. Catalyzes the reversible NADPH linked reduction of 3-dehydroshikimate (DHSA) to yield shikimate (SA). This Escherichia coli O6:K15:H31 (strain 536 / UPEC) protein is Shikimate dehydrogenase (NADP(+)).